A 285-amino-acid chain; its full sequence is Probable endonuclease 4 (285 aa).

9 residues coordinate Zn(2+): His69, His109, Glu145, Asp179, His182, His216, Asp229, His231, and Glu261.

Belongs to the AP endonuclease 2 family. The cofactor is Zn(2+).

The enzyme catalyses Endonucleolytic cleavage to 5'-phosphooligonucleotide end-products.. Functionally, endonuclease IV plays a role in DNA repair. It cleaves phosphodiester bonds at apurinic or apyrimidinic (AP) sites, generating a 3'-hydroxyl group and a 5'-terminal sugar phosphate. This is Probable endonuclease 4 from Cronobacter sakazakii (strain ATCC BAA-894) (Enterobacter sakazakii).